We begin with the raw amino-acid sequence, 199 residues long: Ribosome maturation factor RimM (199 aa).

One can recognise a PRC barrel domain in the interval 93–169 (DDEYYHADLI…IELPDEIDGE (77 aa)). The interval 164–199 (DEIDGEDRASADESASAEDDAAAPNSARHPRESGDP) is disordered.

It belongs to the RimM family. In terms of assembly, binds ribosomal protein uS19.

Its subcellular location is the cytoplasm. Its function is as follows. An accessory protein needed during the final step in the assembly of 30S ribosomal subunit, possibly for assembly of the head region. Essential for efficient processing of 16S rRNA. May be needed both before and after RbfA during the maturation of 16S rRNA. It has affinity for free ribosomal 30S subunits but not for 70S ribosomes. This chain is Ribosome maturation factor RimM, found in Bradyrhizobium sp. (strain ORS 278).